Reading from the N-terminus, the 576-residue chain is MNIQWILSDKIKRAMIAAGAEQNAEPLVRQSGKPQFGDYQANGIMGAAKKLGLNPREFAQKVLEQVDLSDIAEKTEIAGPGFINIFLNKNWVAQQADTALNTPNFGIKTAHPQTVVIDYSSPNVAKEMHVGHLRSTIIGDAVARALEFMGNHVIRANHVGDWGTQFGMLIAYLEKMENEHADAMQLSDLEAFYRAAKETYDNDEEFAVKARSYVVKLQSGDEYCRTMWKKLVDMTMQQNQRNYERLNVTLTEKDVMGESLYNPMLPAIVEDLKKQGLAVEDDGALVVYLDEFKNKDGDPMGVIVQKKDGGFLYTTTDIAAAKYRYHTLHADRALVFSDTRQSQHMQQAWLITRKAGYVPDSFSLEHHNFGMMLGKDGKPFKTRSGGTVKLADLLDEAVERATLLINEKNTALSEQEKAAVIEAVAIGSVKYADLSKNRTTDYVFDWDNMLSFEGNTAPYMQYAYTRIRSIFNKTDVNPTALSAAHIEIRNDKERALAIKLLQFEEAVQTVAKDGTPHILCNYLYELAGVFSSFYEHCPILNAEEPVKLSRLKLAKLTEKTLKQGLDLLGIKTVEKM.

The short motif at 122–132 (PNVAKEMHVGH) is the 'HIGH' region element.

It belongs to the class-I aminoacyl-tRNA synthetase family. As to quaternary structure, monomer.

It is found in the cytoplasm. It catalyses the reaction tRNA(Arg) + L-arginine + ATP = L-arginyl-tRNA(Arg) + AMP + diphosphate. This is Arginine--tRNA ligase from Mannheimia succiniciproducens (strain KCTC 0769BP / MBEL55E).